Consider the following 545-residue polypeptide: 1,3-beta-glucanosyltransferase ARB_07487 (545 aa).

A signal peptide spans 1-19 (MKFSSLAAATALVAGSVVA). N-linked (GlcNAc...) asparagine glycosylation is found at Asn-51 and Asn-69. Residues Cys-88 and Cys-117 are joined by a disulfide bond. Residues Tyr-106, 133–141 (SEPSTSIIR), Asn-174, and Glu-175 each bind (1,3-beta-D-glucosyl)n. Residue Glu-175 is the Proton donor of the active site. A glycan (N-linked (GlcNAc...) asparagine) is linked at Asn-179. (1,3-beta-D-glucosyl)n contacts are provided by Asp-216 and Arg-221. Cystine bridges form between Cys-230–Cys-363, Cys-248–Cys-279, Cys-384–Cys-437, Cys-393–Cys-464, and Cys-412–Cys-419. The active-site Nucleophile is the Glu-276. Tyr-308 provides a ligand contact to (1,3-beta-D-glucosyl)n. Residues 493 to 513 (GTGSVTSAPGSGGNKPDQGAA) are disordered. Ala-512 carries GPI-anchor amidated alanine lipidation. Residues 513-545 (ASTISAPSVNLGIVKLGAYIFCAVLAGAGMILI) constitute a propeptide, removed in mature form.

This sequence belongs to the glycosyl hydrolase 72 family. Post-translationally, the GPI-anchor is attached to the protein in the endoplasmic reticulum and serves to target the protein to the cell surface. There, the glucosamine-inositol phospholipid moiety is cleaved off and the GPI-modified mannoprotein is covalently attached via its lipidless GPI glycan remnant to the 1,6-beta-glucan of the outer cell wall layer.

The protein localises to the secreted. It is found in the cell membrane. The protein resides in the cell wall. In terms of biological role, splits internally a 1,3-beta-glucan molecule and transfers the newly generated reducing end (the donor) to the non-reducing end of another 1,3-beta-glucan molecule (the acceptor) forming a 1,3-beta linkage, resulting in the elongation of 1,3-beta-glucan chains in the cell wall. Involved in cell wall biosynthesis and morphogenesis. The chain is 1,3-beta-glucanosyltransferase ARB_07487 from Arthroderma benhamiae (strain ATCC MYA-4681 / CBS 112371) (Trichophyton mentagrophytes).